Consider the following 140-residue polypeptide: Small ribosomal subunit protein uS12 (140 aa).

Aspartate 102 is subject to 3-methylthioaspartic acid.

The protein belongs to the universal ribosomal protein uS12 family. Part of the 30S ribosomal subunit. Contacts proteins S8 and S17. May interact with IF1 in the 30S initiation complex.

Functionally, with S4 and S5 plays an important role in translational accuracy. In terms of biological role, interacts with and stabilizes bases of the 16S rRNA that are involved in tRNA selection in the A site and with the mRNA backbone. Located at the interface of the 30S and 50S subunits, it traverses the body of the 30S subunit contacting proteins on the other side and probably holding the rRNA structure together. The combined cluster of proteins S8, S12 and S17 appears to hold together the shoulder and platform of the 30S subunit. This chain is Small ribosomal subunit protein uS12, found in Bacillus anthracis (strain A0248).